The chain runs to 183 residues: ATP synthase subunit b, chloroplastic (183 aa).

Residues 33–51 (IINLSVVIGVVVSFGGDAL) form a helical membrane-spanning segment.

Belongs to the ATPase B chain family. F-type ATPases have 2 components, F(1) - the catalytic core - and F(0) - the membrane proton channel. F(1) has five subunits: alpha(3), beta(3), gamma(1), delta(1), epsilon(1). F(0) has four main subunits: a(1), b(1), b'(1) and c(10-14). The alpha and beta chains form an alternating ring which encloses part of the gamma chain. F(1) is attached to F(0) by a central stalk formed by the gamma and epsilon chains, while a peripheral stalk is formed by the delta, b and b' chains.

The protein resides in the plastid. The protein localises to the chloroplast thylakoid membrane. In terms of biological role, f(1)F(0) ATP synthase produces ATP from ADP in the presence of a proton or sodium gradient. F-type ATPases consist of two structural domains, F(1) containing the extramembraneous catalytic core and F(0) containing the membrane proton channel, linked together by a central stalk and a peripheral stalk. During catalysis, ATP synthesis in the catalytic domain of F(1) is coupled via a rotary mechanism of the central stalk subunits to proton translocation. Its function is as follows. Component of the F(0) channel, it forms part of the peripheral stalk, linking F(1) to F(0). This chain is ATP synthase subunit b, chloroplastic, found in Oltmannsiellopsis viridis (Marine flagellate).